A 347-amino-acid chain; its full sequence is Holliday junction branch migration complex subunit RuvB (347 aa).

A compositionally biased stretch (polar residues) spans 1–10; it reads MAIVSSSSGR. Residues 1-29 form a disordered region; sequence MAIVSSSSGRKSPCRETALVDPQPAPEEQ. The interval 13-198 is large ATPase domain (RuvB-L); that stretch reads PCRETALVDP…FGLIQRLEFY (186 aa). Residues Leu-37, Arg-38, Gly-79, Lys-82, Thr-83, Thr-84, Arg-188, Tyr-198, and Arg-235 each coordinate ATP. Thr-83 is a Mg(2+) binding site. Residues 199–270 form a small ATPAse domain (RuvB-S) region; it reads GQTDLEAIVA…MVAEALSLHR (72 aa). The segment at 273-347 is head domain (RuvB-H); the sequence is HRGLDASDRR…AARSHIAEAA (75 aa). Residues Arg-328 and Arg-333 each contribute to the DNA site.

It belongs to the RuvB family. In terms of assembly, homohexamer. Forms an RuvA(8)-RuvB(12)-Holliday junction (HJ) complex. HJ DNA is sandwiched between 2 RuvA tetramers; dsDNA enters through RuvA and exits via RuvB. An RuvB hexamer assembles on each DNA strand where it exits the tetramer. Each RuvB hexamer is contacted by two RuvA subunits (via domain III) on 2 adjacent RuvB subunits; this complex drives branch migration. In the full resolvosome a probable DNA-RuvA(4)-RuvB(12)-RuvC(2) complex forms which resolves the HJ.

It is found in the cytoplasm. The catalysed reaction is ATP + H2O = ADP + phosphate + H(+). Its function is as follows. The RuvA-RuvB-RuvC complex processes Holliday junction (HJ) DNA during genetic recombination and DNA repair, while the RuvA-RuvB complex plays an important role in the rescue of blocked DNA replication forks via replication fork reversal (RFR). RuvA specifically binds to HJ cruciform DNA, conferring on it an open structure. The RuvB hexamer acts as an ATP-dependent pump, pulling dsDNA into and through the RuvAB complex. RuvB forms 2 homohexamers on either side of HJ DNA bound by 1 or 2 RuvA tetramers; 4 subunits per hexamer contact DNA at a time. Coordinated motions by a converter formed by DNA-disengaged RuvB subunits stimulates ATP hydrolysis and nucleotide exchange. Immobilization of the converter enables RuvB to convert the ATP-contained energy into a lever motion, pulling 2 nucleotides of DNA out of the RuvA tetramer per ATP hydrolyzed, thus driving DNA branch migration. The RuvB motors rotate together with the DNA substrate, which together with the progressing nucleotide cycle form the mechanistic basis for DNA recombination by continuous HJ branch migration. Branch migration allows RuvC to scan DNA until it finds its consensus sequence, where it cleaves and resolves cruciform DNA. This is Holliday junction branch migration complex subunit RuvB from Synechococcus sp. (strain CC9902).